The chain runs to 330 residues: Ketol-acid reductoisomerase (NADP(+)) (330 aa).

The KARI N-terminal Rossmann domain maps to Ala2–Thr181. Residues Tyr25–Gln28, Arg48, Ser52, and Asp82–Gln85 contribute to the NADP(+) site. The active site involves His107. Gly133 provides a ligand contact to NADP(+). Positions Thr182 to Ile327 constitute a KARI C-terminal knotted domain. Mg(2+) contacts are provided by Asp190, Glu194, Glu226, and Glu230. Ser251 contributes to the substrate binding site.

Belongs to the ketol-acid reductoisomerase family. Requires Mg(2+) as cofactor.

The enzyme catalyses (2R)-2,3-dihydroxy-3-methylbutanoate + NADP(+) = (2S)-2-acetolactate + NADPH + H(+). It catalyses the reaction (2R,3R)-2,3-dihydroxy-3-methylpentanoate + NADP(+) = (S)-2-ethyl-2-hydroxy-3-oxobutanoate + NADPH + H(+). It functions in the pathway amino-acid biosynthesis; L-isoleucine biosynthesis; L-isoleucine from 2-oxobutanoate: step 2/4. It participates in amino-acid biosynthesis; L-valine biosynthesis; L-valine from pyruvate: step 2/4. In terms of biological role, involved in the biosynthesis of branched-chain amino acids (BCAA). Catalyzes an alkyl-migration followed by a ketol-acid reduction of (S)-2-acetolactate (S2AL) to yield (R)-2,3-dihydroxy-isovalerate. In the isomerase reaction, S2AL is rearranged via a Mg-dependent methyl migration to produce 3-hydroxy-3-methyl-2-ketobutyrate (HMKB). In the reductase reaction, this 2-ketoacid undergoes a metal-dependent reduction by NADPH to yield (R)-2,3-dihydroxy-isovalerate. The sequence is that of Ketol-acid reductoisomerase (NADP(+)) from Macrococcus caseolyticus (strain JCSC5402) (Macrococcoides caseolyticum).